A 533-amino-acid chain; its full sequence is MEIKNIKEFEKASKKLQKDTLKIALALLFLIGAALLALIFGQANSKGLLLIFAAVIGGYMAMNIGANDVSNNVGPAVGSKAISMGGAILIAAICEMLGAIIAGGEVVSTIKGRIVSPEFINDAHIFINVMLASLLSGALWLHVATLIGAPVSTSHSVVGGIMGAGMAAAGMVAVNWHFLSGIVASWVISPLMGALIAMFFLMLIKKTIAYKEDKKSAALKVVPYLVALMSLTFSWYLIVKVLKRLYALNFEIQLACGCILALLIFILFKRFVLKKAPQLENSHESINELFNVPLIFAAALLSFAHGANDVANAIGPLAAISQTLEDANSPIGNTLSSVPLWIMVVGAAGIALGLSLYGPKLIKTVGSEITELDKMQAFCIALSAVITVLLASQLGLPVSSTHIVVGAVFGVGFLRERLREQSRRRFARIRDNIVAAHFGEDLEEIEGFLERFDKANLKEKSLMLESLKKSKNTAIALELKKKEKKSLKKVYKEEVIKRSILKKIVTAWLVTVPVSALLGALLFVALGFIEKYF.

Transmembrane regions (helical) follow at residues 23–43, 47–67, 81–101, 129–149, 156–176, 182–202, 221–241, 248–268, 286–306, 338–358, 372–392, and 509–529; these read IALALLFLIGAALLALIFGQA, GLLLIFAAVIGGYMAMNIGAN, AISMGGAILIAAICEMLGAII, VMLASLLSGALWLHVATLIGA, SVVGGIMGAGMAAAGMVAVNW, IVASWVISPLMGALIAMFFLM, VVPYLVALMSLTFSWYLIVKV, LNFEIQLACGCILALLIFILF, INELFNVPLIFAAALLSFAHG, VPLWIMVVGAAGIALGLSLYG, LDKMQAFCIALSAVITVLLAS, and LVTVPVSALLGALLFVALGFI.

It belongs to the inorganic phosphate transporter (PiT) (TC 2.A.20) family.

Its subcellular location is the cell membrane. Its function is as follows. Potential transporter for phosphate. This is Putative phosphate permease HP_1491 from Helicobacter pylori (strain ATCC 700392 / 26695) (Campylobacter pylori).